Consider the following 514-residue polypeptide: Exoglucanase 1 (514 aa).

An N-terminal signal peptide occupies residues 1–17; it reads MYQKLALISAFLATARA. The catalytic stretch occupies residues 18-453; the sequence is QSACTLQAET…GSTGNSSGGN (436 aa). 10 disulfide bridges follow: cysteine 21-cysteine 89, cysteine 36-cysteine 42, cysteine 67-cysteine 88, cysteine 78-cysteine 84, cysteine 155-cysteine 414, cysteine 189-cysteine 227, cysteine 193-cysteine 226, cysteine 247-cysteine 273, cysteine 255-cysteine 260, and cysteine 278-cysteine 348. N-linked (GlcNAc...) asparagine glycans are attached at residues asparagine 62 and asparagine 81. Glutamate 229 functions as the Nucleophile in the catalytic mechanism. The active-site Proton donor is the glutamate 234. The N-linked (GlcNAc...) asparagine glycan is linked to asparagine 287. 2 disordered regions span residues 401–427 and 444–481; these read NETSSTPGAVRGSCSTSSGVPAQLESN and GSTGNSSGGNPPGGNPPGTTTTRRPATSTGSSPGPTQT. The linker stretch occupies residues 454-478; it reads PPGGNPPGTTTTRRPATSTGSSPGP. Positions 460-479 are enriched in low complexity; it reads PGTTTTRRPATSTGSSPGPT. Residues 478–514 form the CBM1 domain; that stretch reads PTQTHYGQCGGIGYSGPTVCASGSTCQVLNPYYSQCL. 2 disulfides stabilise this stretch: cysteine 486–cysteine 503 and cysteine 497–cysteine 513.

This sequence belongs to the glycosyl hydrolase 7 (cellulase C) family.

It catalyses the reaction Hydrolysis of (1-&gt;4)-beta-D-glucosidic linkages in cellulose and cellotetraose, releasing cellobiose from the non-reducing ends of the chains.. The biological conversion of cellulose to glucose generally requires three types of hydrolytic enzymes: (1) Endoglucanases which cut internal beta-1,4-glucosidic bonds; (2) Exocellobiohydrolases that cut the disaccharide cellobiose from the non-reducing end of the cellulose polymer chain; (3) Beta-1,4-glucosidases which hydrolyze the cellobiose and other short cello-oligosaccharides to glucose. The polypeptide is Exoglucanase 1 (cbh1) (Hypocrea rufa (Trichoderma viride)).